The primary structure comprises 264 residues: Exosome complex component Rrp4 (264 aa).

The S1 motif domain occupies 65-137 (GDNVLGKIVD…EVNNIELTTK (73 aa)). Residues 147-206 (RGGQIIKITSSKVPRVIGKGGSMINMIKKLTQSRIIVGQNGWIWISSKNPELEKLAIEAI) enclose the KH domain. Positions 244–258 (SLEEETQEETVMEND) are enriched in acidic residues. Residues 244–264 (SLEEETQEETVMENDVEARGP) are disordered.

This sequence belongs to the RRP4 family. In terms of assembly, component of the archaeal exosome complex. Forms a trimer of Rrp4 and/or Csl4 subunits. The trimer associates with a hexameric ring-like arrangement composed of 3 Rrp41-Rrp42 heterodimers.

It localises to the cytoplasm. Non-catalytic component of the exosome, which is a complex involved in RNA degradation. Increases the RNA binding and the efficiency of RNA degradation. Confers strong poly(A) specificity to the exosome. The protein is Exosome complex component Rrp4 of Pyrococcus furiosus (strain ATCC 43587 / DSM 3638 / JCM 8422 / Vc1).